Consider the following 425-residue polypeptide: Histidinol dehydrogenase (425 aa).

Positions 124, 184, and 207 each coordinate NAD(+). 3 residues coordinate substrate: S230, Q252, and H255. Residues Q252 and H255 each contribute to the Zn(2+) site. Residues E321 and H322 each act as proton acceptor in the active site. 4 residues coordinate substrate: H322, D355, E409, and H414. Position 355 (D355) interacts with Zn(2+). H414 lines the Zn(2+) pocket.

The protein belongs to the histidinol dehydrogenase family. Zn(2+) is required as a cofactor.

The catalysed reaction is L-histidinol + 2 NAD(+) + H2O = L-histidine + 2 NADH + 3 H(+). It participates in amino-acid biosynthesis; L-histidine biosynthesis; L-histidine from 5-phospho-alpha-D-ribose 1-diphosphate: step 9/9. Catalyzes the sequential NAD-dependent oxidations of L-histidinol to L-histidinaldehyde and then to L-histidine. In Halobacterium salinarum (strain ATCC 700922 / JCM 11081 / NRC-1) (Halobacterium halobium), this protein is Histidinol dehydrogenase.